The chain runs to 293 residues: Probable endoribonuclease YicC (293 aa).

This sequence belongs to the YicC/YloC family. The cofactor is a divalent metal cation.

Its function is as follows. Negatively modulates sporulation, probably in response to nutrient conditions. Effects expression of sporulation regulator spo0A in an indirect manner, possibly via repression of the sinRR' operon. Functionally, probably a ssRNA endonuclease. Might contribute to small RNA (sRNA) regulation. This Clostridioides difficile (strain 630) (Peptoclostridium difficile) protein is Probable endoribonuclease YicC.